The primary structure comprises 458 residues: Argininosuccinate lyase (458 aa).

It belongs to the lyase 1 family. Argininosuccinate lyase subfamily.

The protein localises to the cytoplasm. The enzyme catalyses 2-(N(omega)-L-arginino)succinate = fumarate + L-arginine. It functions in the pathway amino-acid biosynthesis; L-arginine biosynthesis; L-arginine from L-ornithine and carbamoyl phosphate: step 3/3. The sequence is that of Argininosuccinate lyase from Geobacter sulfurreducens (strain ATCC 51573 / DSM 12127 / PCA).